Consider the following 462-residue polypeptide: Glutamate--tRNA ligase 1 (462 aa).

The 'HIGH' region signature appears at 8–18; it reads PSPTGYLHIGG. Residues 237 to 241 carry the 'KMSKS' region motif; the sequence is KLSKR. Residue K240 participates in ATP binding.

The protein belongs to the class-I aminoacyl-tRNA synthetase family. Glutamate--tRNA ligase type 1 subfamily. In terms of assembly, monomer.

The protein resides in the cytoplasm. It catalyses the reaction tRNA(Glu) + L-glutamate + ATP = L-glutamyl-tRNA(Glu) + AMP + diphosphate. Catalyzes the attachment of glutamate to tRNA(Glu) in a two-step reaction: glutamate is first activated by ATP to form Glu-AMP and then transferred to the acceptor end of tRNA(Glu). This Campylobacter hominis (strain ATCC BAA-381 / DSM 21671 / CCUG 45161 / LMG 19568 / NCTC 13146 / CH001A) protein is Glutamate--tRNA ligase 1.